A 408-amino-acid chain; its full sequence is Peptidase T (408 aa).

Residues 1–28 form a disordered region; the sequence is MKNQLIDRLTRYTTIDTQSDPKSTTTPS. Over residues 11–28 the composition is skewed to polar residues; sequence RYTTIDTQSDPKSTTTPS. H78 is a Zn(2+) binding site. D80 is an active-site residue. D140 is a binding site for Zn(2+). E174 acts as the Proton acceptor in catalysis. 3 residues coordinate Zn(2+): E175, D197, and H379.

It belongs to the peptidase M20B family. It depends on Zn(2+) as a cofactor.

It localises to the cytoplasm. The enzyme catalyses Release of the N-terminal residue from a tripeptide.. In terms of biological role, cleaves the N-terminal amino acid of tripeptides. The polypeptide is Peptidase T (Staphylococcus aureus (strain USA300 / TCH1516)).